A 152-amino-acid chain; its full sequence is MRLHELKPNEGATHKKKRVGRGIGSGHGKTSTKGQKGQTSRSGDSKLPARFEGGQTPFIMRIPKRGFKNPSKIEYEIVNLKALENKFNENEEVNPQTLKEKGLVKKGECVKILGDGQLTKKLTVKAHAFSASAEEKIKSVGGIAEKITAETT.

Residues 1–55 (MRLHELKPNEGATHKKKRVGRGIGSGHGKTSTKGQKGQTSRSGDSKLPARFEGGQ) form a disordered region. A compositionally biased stretch (polar residues) spans 28 to 42 (GKTSTKGQKGQTSRS).

It belongs to the universal ribosomal protein uL15 family. In terms of assembly, part of the 50S ribosomal subunit.

Functionally, binds to the 23S rRNA. The chain is Large ribosomal subunit protein uL15 from Sulfurihydrogenibium sp. (strain YO3AOP1).